The primary structure comprises 154 residues: Protein X (154 aa).

The segment at 68–117 (PCALRFTSARRMETTVNAHRNLPKVLHKRTLGLSAMSTTDLEAYFKDCVF) is mitochondrial targeting sequence.

The protein belongs to the orthohepadnavirus protein X family. As to quaternary structure, may form homodimer. May interact with host CEBPA, CFLAR, CREB1, DDB1, E4F1, HBXIP, HSPD1/HSP60, NFKBIA, POLR2E and SMAD4. Interacts with host SMC5-SMC6 complex and induces its degradation. Interacts with host TRPC4AP; leading to prevent ubiquitination of TRPC4AP. Interacts with host PLSCR1; this interaction promotes ubiquitination and degradation of HBx and impairs HBx-mediated cell proliferation. A fraction may be phosphorylated in insect cells and HepG2 cells, a human hepatoblastoma cell line. Phosphorylated in vitro by host protein kinase C or mitogen-activated protein kinase. N-acetylated in insect cells.

The protein resides in the host cytoplasm. The protein localises to the host nucleus. It is found in the host mitochondrion. Functionally, multifunctional protein that plays a role in silencing host antiviral defenses and promoting viral transcription. Does not seem to be essential for HBV infection. May be directly involved in development of cirrhosis and liver cancer (hepatocellular carcinoma). Most of cytosolic activities involve modulation of cytosolic calcium. The effect on apoptosis is controversial depending on the cell types in which the studies have been conducted. May induce apoptosis by localizing in mitochondria and causing loss of mitochondrial membrane potential. May also modulate apoptosis by binding host CFLAR, a key regulator of the death-inducing signaling complex (DISC). Promotes viral transcription by using the host E3 ubiquitin ligase DDB1 to target the SMC5-SMC6 complex to proteasomal degradation. This host complex would otherwise bind to viral episomal DNA, and prevents its transcription. Moderately stimulates transcription of many different viral and cellular transcription elements. Promoters and enhancers stimulated by HBx contain DNA binding sites for NF-kappa-B, AP-1, AP-2, c-EBP, ATF/CREB, or the calcium-activated factor NF-AT. This Hepatitis B virus genotype B1 subtype adw (isolate Japan/pJDW233/1988) (HBV-B) protein is Protein X.